Consider the following 499-residue polypeptide: Long chain base biosynthesis protein 2b (499 aa).

Residues 5-25 form a helical membrane-spanning segment; that stretch reads VPYVTAATTLFSFGLIFGFGH. Lys322 is subject to N6-(pyridoxal phosphate)lysine.

It belongs to the class-II pyridoxal-phosphate-dependent aminotransferase family. Heterodimer with LCB1. Component of the serine palmitoyltransferase (SPT) complex, composed of LCB1 and LCB2. The cofactor is pyridoxal 5'-phosphate.

Its subcellular location is the endoplasmic reticulum membrane. It catalyses the reaction L-serine + hexadecanoyl-CoA + H(+) = 3-oxosphinganine + CO2 + CoA. The protein operates within lipid metabolism; sphingolipid metabolism. Serine palmitoyltransferase (SPT). The heterodimer formed with LCB1 constitutes the catalytic core. This is Long chain base biosynthesis protein 2b from Oryza sativa subsp. japonica (Rice).